The following is a 312-amino-acid chain: Protoheme IX farnesyltransferase (312 aa).

9 consecutive transmembrane segments (helical) span residues 31 to 51 (LLMK…GLFI), 58 to 78 (PLLS…AGAI), 107 to 127 (TALT…AICV), 130 to 150 (ISSI…TMWL), 157 to 177 (NIVI…SAVT), 184 to 204 (CLML…TLSL), 229 to 249 (YSIL…YFTD), 250 to 270 (IAGL…LCYA), and 286 to 306 (FKYS…EHCI).

The protein belongs to the UbiA prenyltransferase family. Protoheme IX farnesyltransferase subfamily.

It localises to the cell inner membrane. It catalyses the reaction heme b + (2E,6E)-farnesyl diphosphate + H2O = Fe(II)-heme o + diphosphate. It functions in the pathway porphyrin-containing compound metabolism; heme O biosynthesis; heme O from protoheme: step 1/1. Converts heme B (protoheme IX) to heme O by substitution of the vinyl group on carbon 2 of heme B porphyrin ring with a hydroxyethyl farnesyl side group. In Orientia tsutsugamushi (strain Ikeda) (Rickettsia tsutsugamushi), this protein is Protoheme IX farnesyltransferase.